We begin with the raw amino-acid sequence, 266 residues long: Thymidylate synthase (266 aa).

DUMP is bound at residue R24. H54 serves as a coordination point for (6R)-5,10-methylene-5,6,7,8-tetrahydrofolate. Position 129–130 (129–130 (RR)) interacts with dUMP. The active-site Nucleophile is C149. Residues 169-172 (RSAD), N180, and 210-212 (HIY) contribute to the dUMP site. D172 is a binding site for (6R)-5,10-methylene-5,6,7,8-tetrahydrofolate. Residue A265 coordinates (6R)-5,10-methylene-5,6,7,8-tetrahydrofolate.

The protein belongs to the thymidylate synthase family. Bacterial-type ThyA subfamily. Homodimer.

It is found in the cytoplasm. The catalysed reaction is dUMP + (6R)-5,10-methylene-5,6,7,8-tetrahydrofolate = 7,8-dihydrofolate + dTMP. The protein operates within pyrimidine metabolism; dTTP biosynthesis. Its function is as follows. Catalyzes the reductive methylation of 2'-deoxyuridine-5'-monophosphate (dUMP) to 2'-deoxythymidine-5'-monophosphate (dTMP) while utilizing 5,10-methylenetetrahydrofolate (mTHF) as the methyl donor and reductant in the reaction, yielding dihydrofolate (DHF) as a by-product. This enzymatic reaction provides an intracellular de novo source of dTMP, an essential precursor for DNA biosynthesis. The protein is Thymidylate synthase of Mycobacterium avium (strain 104).